Reading from the N-terminus, the 110-residue chain is DNA-binding protein Pars_1791 (110 aa).

It belongs to the PDCD5 family.

The protein is DNA-binding protein Pars_1791 of Pyrobaculum arsenaticum (strain DSM 13514 / JCM 11321 / PZ6).